A 380-amino-acid chain; its full sequence is 1-deoxy-D-xylulose 5-phosphate reductoisomerase (380 aa).

The NADPH site is built by Thr-10, Gly-11, Ser-12, Ile-13, Gly-35, Arg-36, Asn-37, and Asn-121. Lys-122 provides a ligand contact to 1-deoxy-D-xylulose 5-phosphate. Glu-123 serves as a coordination point for NADPH. Asp-147 lines the Mn(2+) pocket. Ser-148, Glu-149, Ser-173, and His-196 together coordinate 1-deoxy-D-xylulose 5-phosphate. Glu-149 serves as a coordination point for Mn(2+). Gly-202 serves as a coordination point for NADPH. Ser-209, Asn-214, Lys-215, and Glu-218 together coordinate 1-deoxy-D-xylulose 5-phosphate. Residue Glu-218 coordinates Mn(2+).

This sequence belongs to the DXR family. Mg(2+) serves as cofactor. It depends on Mn(2+) as a cofactor.

It catalyses the reaction 2-C-methyl-D-erythritol 4-phosphate + NADP(+) = 1-deoxy-D-xylulose 5-phosphate + NADPH + H(+). It participates in isoprenoid biosynthesis; isopentenyl diphosphate biosynthesis via DXP pathway; isopentenyl diphosphate from 1-deoxy-D-xylulose 5-phosphate: step 1/6. Functionally, catalyzes the NADPH-dependent rearrangement and reduction of 1-deoxy-D-xylulose-5-phosphate (DXP) to 2-C-methyl-D-erythritol 4-phosphate (MEP). This Agathobacter rectalis (strain ATCC 33656 / DSM 3377 / JCM 17463 / KCTC 5835 / VPI 0990) (Eubacterium rectale) protein is 1-deoxy-D-xylulose 5-phosphate reductoisomerase.